The primary structure comprises 295 residues: Cyclin-G1 (295 aa).

Belongs to the cyclin family. Cyclin G subfamily.

The protein resides in the nucleus. Functionally, may play a role in growth regulation. Is associated with G2/M phase arrest in response to DNA damage. May be an intermediate by which p53 mediates its role as an inhibitor of cellular proliferation. In Bos taurus (Bovine), this protein is Cyclin-G1 (CCNG1).